The chain runs to 60 residues: Conotoxin Pu5.6 (60 aa).

Positions 1–19 (MRCVPVFVILLLLIASAAS) are cleaved as a signal peptide. Positions 20-47 (IDAQQKTKDDAPLTSLNDNALQQHWNKR) are excised as a propeptide.

Belongs to the conotoxin T superfamily. Post-translationally, contains 2 disulfide bonds that can be either 'C1-C3, C2-C4' or 'C1-C4, C2-C3', since these disulfide connectivities have been observed for conotoxins with cysteine framework V (for examples, see AC P0DQQ7 and AC P81755). Expressed by the venom duct.

The protein resides in the secreted. The protein is Conotoxin Pu5.6 of Conus pulicarius (Flea-bitten cone).